The primary structure comprises 555 residues: 2-isopropylmalate synthase (555 aa).

The Pyruvate carboxyltransferase domain maps to 30 to 303; sequence PIWCSVDLRD…DPGLDCTDIN (274 aa). Residues aspartate 39, histidine 242, histidine 244, and asparagine 278 each coordinate Mg(2+). The regulatory domain stretch occupies residues 437–555; sequence QPDARIKFVD…VSAANRVIAK (119 aa).

The protein belongs to the alpha-IPM synthase/homocitrate synthase family. LeuA type 2 subfamily. Homodimer. Requires Mg(2+) as cofactor.

It is found in the cytoplasm. It carries out the reaction 3-methyl-2-oxobutanoate + acetyl-CoA + H2O = (2S)-2-isopropylmalate + CoA + H(+). It participates in amino-acid biosynthesis; L-leucine biosynthesis; L-leucine from 3-methyl-2-oxobutanoate: step 1/4. In terms of biological role, catalyzes the condensation of the acetyl group of acetyl-CoA with 3-methyl-2-oxobutanoate (2-ketoisovalerate) to form 3-carboxy-3-hydroxy-4-methylpentanoate (2-isopropylmalate). This is 2-isopropylmalate synthase from Brucella suis biovar 1 (strain 1330).